Here is a 431-residue protein sequence, read N- to C-terminus: Serine--tRNA ligase (431 aa).

237–239 (TAE) contacts L-serine. ATP is bound at residue 268-270 (RSE). Residue Glu291 participates in L-serine binding. ATP is bound at residue 355 to 358 (EISS). Ser390 contributes to the L-serine binding site.

The protein belongs to the class-II aminoacyl-tRNA synthetase family. Type-1 seryl-tRNA synthetase subfamily. In terms of assembly, homodimer. The tRNA molecule binds across the dimer.

Its subcellular location is the cytoplasm. It catalyses the reaction tRNA(Ser) + L-serine + ATP = L-seryl-tRNA(Ser) + AMP + diphosphate + H(+). The catalysed reaction is tRNA(Sec) + L-serine + ATP = L-seryl-tRNA(Sec) + AMP + diphosphate + H(+). It functions in the pathway aminoacyl-tRNA biosynthesis; selenocysteinyl-tRNA(Sec) biosynthesis; L-seryl-tRNA(Sec) from L-serine and tRNA(Sec): step 1/1. Functionally, catalyzes the attachment of serine to tRNA(Ser). Is also able to aminoacylate tRNA(Sec) with serine, to form the misacylated tRNA L-seryl-tRNA(Sec), which will be further converted into selenocysteinyl-tRNA(Sec). The polypeptide is Serine--tRNA ligase (Neisseria meningitidis serogroup C (strain 053442)).